We begin with the raw amino-acid sequence, 229 residues long: Enolase-phosphatase E1 (229 aa).

The protein belongs to the HAD-like hydrolase superfamily. MasA/MtnC family. Monomer. Mg(2+) is required as a cofactor.

The enzyme catalyses 5-methylsulfanyl-2,3-dioxopentyl phosphate + H2O = 1,2-dihydroxy-5-(methylsulfanyl)pent-1-en-3-one + phosphate. It participates in amino-acid biosynthesis; L-methionine biosynthesis via salvage pathway; L-methionine from S-methyl-5-thio-alpha-D-ribose 1-phosphate: step 3/6. It functions in the pathway amino-acid biosynthesis; L-methionine biosynthesis via salvage pathway; L-methionine from S-methyl-5-thio-alpha-D-ribose 1-phosphate: step 4/6. Bifunctional enzyme that catalyzes the enolization of 2,3-diketo-5-methylthiopentyl-1-phosphate (DK-MTP-1-P) into the intermediate 2-hydroxy-3-keto-5-methylthiopentenyl-1-phosphate (HK-MTPenyl-1-P), which is then dephosphorylated to form the acireductone 1,2-dihydroxy-3-keto-5-methylthiopentene (DHK-MTPene). This Yersinia pseudotuberculosis serotype O:1b (strain IP 31758) protein is Enolase-phosphatase E1.